A 177-amino-acid chain; its full sequence is Large ribosomal subunit protein uL6 (177 aa).

It belongs to the universal ribosomal protein uL6 family. In terms of assembly, part of the 50S ribosomal subunit.

This protein binds to the 23S rRNA, and is important in its secondary structure. It is located near the subunit interface in the base of the L7/L12 stalk, and near the tRNA binding site of the peptidyltransferase center. This is Large ribosomal subunit protein uL6 from Edwardsiella ictaluri (strain 93-146).